A 74-amino-acid polypeptide reads, in one-letter code: MALTKEQKQEIIKQNSHFAKDTGSSEVQIAILSAEIKQLSEHLKQHPHDFHSKRGLFMKNSKRRNLVKYLANQN.

This sequence belongs to the universal ribosomal protein uS15 family. Part of the 30S ribosomal subunit. Forms a bridge to the 50S subunit in the 70S ribosome, contacting the 23S rRNA.

Functionally, one of the primary rRNA binding proteins, it binds directly to 16S rRNA where it helps nucleate assembly of the platform of the 30S subunit by binding and bridging several RNA helices of the 16S rRNA. Forms an intersubunit bridge (bridge B4) with the 23S rRNA of the 50S subunit in the ribosome. In Aster yellows witches'-broom phytoplasma (strain AYWB), this protein is Small ribosomal subunit protein uS15.